We begin with the raw amino-acid sequence, 843 residues long: Aminopeptidase N (843 aa).

Residues glutamate 120 and glycine 252–asparagine 256 contribute to the substrate site. Histidine 288 serves as a coordination point for Zn(2+). Residue glutamate 289 is the Proton acceptor of the active site. Zn(2+) is bound by residues histidine 292 and glutamate 311.

This sequence belongs to the peptidase M1 family. In terms of assembly, monomer. Requires Zn(2+) as cofactor.

It is found in the cytoplasm. It carries out the reaction Release of an N-terminal amino acid, Xaa-|-Yaa- from a peptide, amide or arylamide. Xaa is preferably Ala, but may be most amino acids including Pro (slow action). When a terminal hydrophobic residue is followed by a prolyl residue, the two may be released as an intact Xaa-Pro dipeptide.. Its function is as follows. Aminopeptidase with broad substrate specificity to several peptides. This chain is Aminopeptidase N (pepN), found in Lactobacillus delbrueckii subsp. lactis.